The sequence spans 983 residues: Protein translocase subunit SecA (983 aa).

ATP-binding positions include Gln-83, 101–105, and Asp-489; that span reads GEGKT. Residues 948–983 are disordered; the sequence is ISSEEEDNNEKTNINNNEDLERTKGEAQQTAKNPNE. The segment covering 973-983 has biased composition (polar residues); it reads EAQQTAKNPNE.

This sequence belongs to the SecA family. As to quaternary structure, monomer and homodimer. Part of the essential Sec protein translocation apparatus which comprises SecA, SecYEG and auxiliary proteins SecDF. Other proteins may also be involved.

It localises to the cell membrane. It is found in the cytoplasm. The enzyme catalyses ATP + H2O + cellular proteinSide 1 = ADP + phosphate + cellular proteinSide 2.. Its function is as follows. Part of the Sec protein translocase complex. Interacts with the SecYEG preprotein conducting channel. Has a central role in coupling the hydrolysis of ATP to the transfer of proteins into and across the cell membrane, serving as an ATP-driven molecular motor driving the stepwise translocation of polypeptide chains across the membrane. This is Protein translocase subunit SecA from Mesomycoplasma hyopneumoniae (strain 232) (Mycoplasma hyopneumoniae).